The sequence spans 185 residues: Thymidine kinase (185 aa).

Residue 17-24 coordinates ATP; that stretch reads GPMFAGKT. Glu-92 functions as the Proton acceptor in the catalytic mechanism. Phe-121 serves as a coordination point for substrate. Positions 146 and 149 each coordinate Zn(2+). Position 166–170 (166–170) interacts with substrate; it reads LILAG. 2 residues coordinate Zn(2+): Cys-179 and Cys-182.

The protein belongs to the thymidine kinase family.

It catalyses the reaction thymidine + ATP = dTMP + ADP + H(+). In terms of biological role, phosphorylates thymidine. ASFV replicates in the cytoplasm of infected cells and contains genes encoding a number of enzymes needed for DNA synthesis, including thymidine kinase. Important for growth in swine macrophages in vitro and is a virus virulence factor in swine. This chain is Thymidine kinase, found in African swine fever virus (isolate Pig/Kenya/KEN-50/1950) (ASFV).